The chain runs to 469 residues: Serine hydroxymethyltransferase, cytosolic (469 aa).

Threonine 20 is modified (phosphothreonine). Phosphoserine is present on serine 26. Position 248 is an N6-(pyridoxal phosphate)lysine (lysine 248). Serine 429 is modified (phosphoserine). Lysine 456 is covalently cross-linked (Glycyl lysine isopeptide (Lys-Gly) (interchain with G-Cter in ubiquitin)).

The protein belongs to the SHMT family. In terms of assembly, homotetramer. Pyridoxal 5'-phosphate serves as cofactor.

It is found in the cytoplasm. It carries out the reaction (6R)-5,10-methylene-5,6,7,8-tetrahydrofolate + glycine + H2O = (6S)-5,6,7,8-tetrahydrofolate + L-serine. It participates in one-carbon metabolism; tetrahydrofolate interconversion. Interconversion of serine and glycine. The polypeptide is Serine hydroxymethyltransferase, cytosolic (Saccharomyces cerevisiae (strain ATCC 204508 / S288c) (Baker's yeast)).